The primary structure comprises 470 residues: Calcium-binding and coiled-coil domain-containing protein 2 (470 aa).

The short motif at 131 to 134 is the CLIR element; sequence ILLV. A coiled-coil region spans residues 132 to 368; sequence LLVTTEEEAQ…QMEDLSYTLE (237 aa). Residues 201 to 204 carry the LIR-like motif; sequence QQNQ. The segment at 441–464 adopts a UBZ1-type zinc-finger fold; sequence QMQCPECGSEFENFQVFQDHIFCH. 4 residues coordinate Zn(2+): cysteine 444, cysteine 447, histidine 460, and histidine 464.

This sequence belongs to the CALCOCO family.

The protein resides in the cytoplasm. It is found in the perinuclear region. It localises to the cytoskeleton. Its subcellular location is the cytoplasmic vesicle. The protein localises to the autophagosome membrane. Functionally, xenophagy-specific receptor required for autophagy-mediated intracellular bacteria degradation. Acts as an effector protein of galectin-sensed membrane damage that restricts the proliferation of infecting pathogens upon entry into the cytosol by targeting galectin-associated bacteria for autophagy. Initially orchestrates bacteria targeting to autophagosomes and subsequently ensures pathogen degradation by regulating pathogen-containing autophagosome maturation. May play a role in ruffle formation and actin cytoskeleton organization and seems to negatively regulate constitutive secretion. The sequence is that of Calcium-binding and coiled-coil domain-containing protein 2 from Xenopus tropicalis (Western clawed frog).